Reading from the N-terminus, the 412-residue chain is [Pyruvate dehydrogenase (acetyl-transferring)] kinase isozyme 4, mitochondrial (412 aa).

The region spanning 138-368 (IIEYKDSCTV…DAIIYLKALS (231 aa)) is the Histidine kinase domain. ATP is bound by residues 254–261 (ELFKNAMR), Asp-293, 312–313 (ST), and 329–334 (GFGYGL).

The protein belongs to the PDK/BCKDK protein kinase family. In terms of assembly, homodimer. Interacts with the pyruvate dehydrogenase complex subunit DLAT, and is part of the multimeric pyruvate dehydrogenase complex that contains multiple copies of pyruvate dehydrogenase (E1), dihydrolipoamide acetyltransferase (DLAT, E2) and lipoamide dehydrogenase (DLD, E3). In terms of tissue distribution, detected in heart, white adipose tissue and muscle.

Its subcellular location is the mitochondrion matrix. It catalyses the reaction L-seryl-[pyruvate dehydrogenase E1 alpha subunit] + ATP = O-phospho-L-seryl-[pyruvate dehydrogenase E1 alpha subunit] + ADP + H(+). In terms of biological role, kinase that plays a key role in regulation of glucose and fatty acid metabolism and homeostasis via phosphorylation of the pyruvate dehydrogenase subunits PDHA1 and PDHA2. This inhibits pyruvate dehydrogenase activity, and thereby regulates metabolite flux through the tricarboxylic acid cycle, down-regulates aerobic respiration and inhibits the formation of acetyl-coenzyme A from pyruvate. Inhibition of pyruvate dehydrogenase decreases glucose utilization and increases fat metabolism in response to prolonged fasting and starvation. Plays an important role in maintaining normal blood glucose levels under starvation, and is involved in the insulin signaling cascade. Via its regulation of pyruvate dehydrogenase activity, plays an important role in maintaining normal blood pH and in preventing the accumulation of ketone bodies under starvation. In the fed state, mediates cellular responses to glucose levels and to a high-fat diet. Regulates both fatty acid oxidation and de novo fatty acid biosynthesis. Plays a role in the generation of reactive oxygen species. Protects detached epithelial cells against anoikis. Plays a role in cell proliferation via its role in regulating carbohydrate and fatty acid metabolism. This is [Pyruvate dehydrogenase (acetyl-transferring)] kinase isozyme 4, mitochondrial (PDK4) from Rhinolophus ferrumequinum (Greater horseshoe bat).